The sequence spans 803 residues: Leucine--tRNA ligase (803 aa).

The 'HIGH' region signature appears at 40–51 (PYPSGAGLHVGH). The short motif at 575-579 (KMSKS) is the 'KMSKS' region element. Lysine 578 lines the ATP pocket.

The protein belongs to the class-I aminoacyl-tRNA synthetase family.

The protein localises to the cytoplasm. The enzyme catalyses tRNA(Leu) + L-leucine + ATP = L-leucyl-tRNA(Leu) + AMP + diphosphate. The chain is Leucine--tRNA ligase from Listeria monocytogenes serovar 1/2a (strain ATCC BAA-679 / EGD-e).